The primary structure comprises 358 residues: 3-dehydroquinate synthase (358 aa).

Residues 69–74 (DGEAHK), 103–107 (GVIGD), 127–128 (TT), lysine 140, lysine 149, and 167–170 (CLRT) contribute to the NAD(+) site. Residues glutamate 182, histidine 245, and histidine 262 each contribute to the Zn(2+) site.

It belongs to the sugar phosphate cyclases superfamily. Dehydroquinate synthase family. It depends on Co(2+) as a cofactor. Requires Zn(2+) as cofactor. The cofactor is NAD(+).

Its subcellular location is the cytoplasm. The enzyme catalyses 7-phospho-2-dehydro-3-deoxy-D-arabino-heptonate = 3-dehydroquinate + phosphate. The protein operates within metabolic intermediate biosynthesis; chorismate biosynthesis; chorismate from D-erythrose 4-phosphate and phosphoenolpyruvate: step 2/7. Functionally, catalyzes the conversion of 3-deoxy-D-arabino-heptulosonate 7-phosphate (DAHP) to dehydroquinate (DHQ). This Tolumonas auensis (strain DSM 9187 / NBRC 110442 / TA 4) protein is 3-dehydroquinate synthase.